Reading from the N-terminus, the 372-residue chain is E3 ubiquitin-protein ligase RNF34 (372 aa).

The FYVE-type zinc-finger motif lies at 56–107; it reads EGPNIVCKACGLSFSVFRKKHVCCDCKKDFCSVCSVLQENLRRCSTCHLLQE. Residues 115-134 form the SAP 1 domain; sequence LMRLKVKDLRQYLILRNIPT. Ser-169 carries the post-translational modification Phosphoserine. The disordered stretch occupies residues 194-252; it reads QGELMDGDQTSRSGVPAQVQSEITSANTEDDDDDDDEDDDDEEENAEDQNPGLSKERVR. Polar residues predominate over residues 201 to 220; that stretch reads DQTSRSGVPAQVQSEITSAN. Acidic residues predominate over residues 221-240; sequence TEDDDDDDDEDDDDEEENAE. Residues Ser-254 and Ser-256 each carry the phosphoserine modification. Residues 264 to 278 form the SAP 2 domain; the sequence is VEGMSVRQLKEILAR. An RING-type zinc finger spans residues 325–360; it reads CRICMDAVIDCVLLECGHMVTCTKCGKRMSECPICR.

Interacts with CASP8 and CASP10. Interacts with p53/TP53; involved in p53/TP53 ubiquitination. Interacts (via RING-type zinc finger) with MDM2; the interaction stabilizes MDM2. Interacts (via RING-type zinc finger) with PPARGC1A. Interacts with NOD1. Post-translationally, autoubiquitinated (in vitro). Proteolytically cleaved by caspases upon induction of apoptosis by TNF.

It localises to the cell membrane. The protein localises to the endomembrane system. Its subcellular location is the nucleus. It is found in the nucleus speckle. The protein resides in the cytoplasm. It localises to the cytosol. The catalysed reaction is S-ubiquitinyl-[E2 ubiquitin-conjugating enzyme]-L-cysteine + [acceptor protein]-L-lysine = [E2 ubiquitin-conjugating enzyme]-L-cysteine + N(6)-ubiquitinyl-[acceptor protein]-L-lysine.. It participates in protein modification; protein ubiquitination. Its function is as follows. E3 ubiquitin-protein ligase that regulates several biological processes through the ubiquitin-mediated proteasomal degradation of various target proteins. Ubiquitinates the caspases CASP8 and CASP10, promoting their proteasomal degradation, to negatively regulate cell death downstream of death domain receptors in the extrinsic pathway of apoptosis. May mediate 'Lys-48'-linked polyubiquitination of RIPK1 and its subsequent proteasomal degradation thereby indirectly regulating the tumor necrosis factor-mediated signaling pathway. Negatively regulates p53/TP53 through its direct ubiquitination and targeting to proteasomal degradation. Indirectly, may also negatively regulate p53/TP53 through ubiquitination and degradation of SFN. Mediates PPARGC1A proteasomal degradation probably through ubiquitination thereby indirectly regulating the metabolism of brown fat cells. Possibly involved in innate immunity, through 'Lys-48'-linked polyubiquitination of NOD1 and its subsequent proteasomal degradation. This Pongo abelii (Sumatran orangutan) protein is E3 ubiquitin-protein ligase RNF34 (RNF34).